We begin with the raw amino-acid sequence, 594 residues long: Alanine--tRNA ligase (594 aa).

Zn(2+) is bound by residues histidine 456, histidine 460, cysteine 558, and histidine 562.

Belongs to the class-II aminoacyl-tRNA synthetase family. Zn(2+) serves as cofactor.

Its subcellular location is the cytoplasm. The enzyme catalyses tRNA(Ala) + L-alanine + ATP = L-alanyl-tRNA(Ala) + AMP + diphosphate. Its function is as follows. Catalyzes the attachment of alanine to tRNA(Ala) in a two-step reaction: alanine is first activated by ATP to form Ala-AMP and then transferred to the acceptor end of tRNA(Ala). Also edits incorrectly charged Ser-tRNA(Ala) and Gly-tRNA(Ala) via its editing domain. The polypeptide is Alanine--tRNA ligase (alaS) (Borreliella burgdorferi (strain ATCC 35210 / DSM 4680 / CIP 102532 / B31) (Borrelia burgdorferi)).